Consider the following 455-residue polypeptide: Cysteine--tRNA ligase (455 aa).

Cysteine 28 is a Zn(2+) binding site. Residues 30–40 (MTVYDYCHLGH) carry the 'HIGH' region motif. 3 residues coordinate Zn(2+): cysteine 209, histidine 234, and glutamate 238. A 'KMSKS' region motif is present at residues 266–270 (KMSKS). Residue lysine 269 coordinates ATP.

Belongs to the class-I aminoacyl-tRNA synthetase family. As to quaternary structure, monomer. Zn(2+) serves as cofactor.

The protein resides in the cytoplasm. The catalysed reaction is tRNA(Cys) + L-cysteine + ATP = L-cysteinyl-tRNA(Cys) + AMP + diphosphate. The sequence is that of Cysteine--tRNA ligase from Methylobacillus flagellatus (strain ATCC 51484 / DSM 6875 / VKM B-1610 / KT).